A 149-amino-acid polypeptide reads, in one-letter code: Transcriptional repressor NrdR (149 aa).

Residues 3–34 fold into a zinc finger; sequence CPFCAAEETKVVDSRLAADGYQIRRRRECTSC. Positions 49–139 constitute an ATP-cone domain; the sequence is PYVIKNNGNR…VYLSFDDIEE (91 aa).

It belongs to the NrdR family. Zn(2+) is required as a cofactor.

Negatively regulates transcription of bacterial ribonucleotide reductase nrd genes and operons by binding to NrdR-boxes. The polypeptide is Transcriptional repressor NrdR (Actinobacillus pleuropneumoniae serotype 3 (strain JL03)).